The chain runs to 427 residues: Histidine--tRNA ligase (427 aa).

The protein belongs to the class-II aminoacyl-tRNA synthetase family. As to quaternary structure, homodimer.

The protein localises to the cytoplasm. The enzyme catalyses tRNA(His) + L-histidine + ATP = L-histidyl-tRNA(His) + AMP + diphosphate + H(+). This is Histidine--tRNA ligase from Deinococcus radiodurans (strain ATCC 13939 / DSM 20539 / JCM 16871 / CCUG 27074 / LMG 4051 / NBRC 15346 / NCIMB 9279 / VKM B-1422 / R1).